Reading from the N-terminus, the 79-residue chain is Large ribosomal subunit protein uL22 (79 aa).

This sequence belongs to the universal ribosomal protein uL22 family. As to quaternary structure, part of the 50S ribosomal subunit.

Functionally, this protein binds specifically to 23S rRNA; its binding is stimulated by other ribosomal proteins, e.g. L4, L17, and L20. It is important during the early stages of 50S assembly. It makes multiple contacts with different domains of the 23S rRNA in the assembled 50S subunit and ribosome. In terms of biological role, the globular domain of the protein is located near the polypeptide exit tunnel on the outside of the subunit, while an extended beta-hairpin is found that lines the wall of the exit tunnel in the center of the 70S ribosome. The chain is Large ribosomal subunit protein uL22 (rplV) from Prunus armeniaca phytoplasma.